We begin with the raw amino-acid sequence, 629 residues long: Transferrin (629 aa).

A signal peptide spans 1 to 21 (MTIKNVLKLAALLGVLALVQA). Transferrin-like domains follow at residues 26–366 (YRMC…ERDG) and 372–621 (MKMC…GLKC). Cystine bridges form between Cys29–Cys63 and Cys38–Cys54. Tyr111 provides a ligand contact to Fe(3+). 6 cysteine pairs are disulfide-bonded: Cys135/Cys231, Cys184/Cys210, Cys207/Cys216, Cys270/Cys283, Cys375/Cys409, and Cys385/Cys403. Hydrogencarbonate is bound by residues Thr137, Arg141, Val143, and Gly144. Tyr225 is a Fe(3+) binding site. Asp408 and His561 together coordinate Fe(3+).

It belongs to the transferrin family. In terms of assembly, monomer.

Its function is as follows. Transferrins are iron binding transport proteins which bind Fe(3+) ion in association with the binding of an anion, usually bicarbonate. This transferrin binds only one Fe(3+) ion per protein molecule. Transports iron ions from the hemolymph into the eggs during the vitellogenic stage (oogenesis). This chain is Transferrin, found in Sarcophaga peregrina (Flesh fly).